A 91-amino-acid polypeptide reads, in one-letter code: Defensin-like protein 220 (91 aa).

A signal peptide spans 1 to 19 (MKTIFFFITFIVLVSSCTS). Disulfide bonds link cysteine 61/cysteine 78, cysteine 64/cysteine 83, and cysteine 68/cysteine 85.

This sequence belongs to the DEFL family.

Its subcellular location is the secreted. This is Defensin-like protein 220 from Arabidopsis thaliana (Mouse-ear cress).